Consider the following 130-residue polypeptide: Glycine cleavage system H protein (130 aa).

A Lipoyl-binding domain is found at I24–K106. K65 carries the N6-lipoyllysine modification.

Belongs to the GcvH family. In terms of assembly, the glycine cleavage system is composed of four proteins: P, T, L and H. (R)-lipoate serves as cofactor.

The glycine cleavage system catalyzes the degradation of glycine. The H protein shuttles the methylamine group of glycine from the P protein to the T protein. In Pectobacterium atrosepticum (strain SCRI 1043 / ATCC BAA-672) (Erwinia carotovora subsp. atroseptica), this protein is Glycine cleavage system H protein.